Reading from the N-terminus, the 227-residue chain is uncharacterized protein (227 aa).

Residues 7 to 26 (IITLTILIFISGLLTAFLLL) traverse the membrane as a helical segment.

It is found in the membrane. This is an uncharacterized protein from Haemophilus influenzae (strain ATCC 51907 / DSM 11121 / KW20 / Rd).